Here is a 213-residue protein sequence, read N- to C-terminus: Orotate phosphoribosyltransferase (213 aa).

Position 26 (Lys26) interacts with 5-phospho-alpha-D-ribose 1-diphosphate. Orotate is bound at residue 34–35; sequence FF. 5-phospho-alpha-D-ribose 1-diphosphate-binding positions include 72-73, Arg99, Lys100, Lys103, His105, and 124-132; these read YK and DDVITAGTA. Thr128 and Arg156 together coordinate orotate.

It belongs to the purine/pyrimidine phosphoribosyltransferase family. PyrE subfamily. Homodimer. The cofactor is Mg(2+).

The enzyme catalyses orotidine 5'-phosphate + diphosphate = orotate + 5-phospho-alpha-D-ribose 1-diphosphate. It functions in the pathway pyrimidine metabolism; UMP biosynthesis via de novo pathway; UMP from orotate: step 1/2. Functionally, catalyzes the transfer of a ribosyl phosphate group from 5-phosphoribose 1-diphosphate to orotate, leading to the formation of orotidine monophosphate (OMP). In Enterobacter sp. (strain 638), this protein is Orotate phosphoribosyltransferase.